The sequence spans 384 residues: MMTLPGIGVFGTGNTARVLIQLLRAEGFSIEALWGKTDEDAKVVAEEMGIPFYTSHTDDVLLHQEVDLVCISIPPPLTRQIAVKALGIGKNVICEKAASSLDAFTMVKAARYYPKLMSLVGNALRFLPAFDRMRQLILEQGYVGEIRICDVRVYGGSLLSSNYSWICDDLMGGGGLHTLGTYLVDLLTHLTNKKAEKVHGFLKTFVKQNEAISGIRYVTSDDFCFFQMQMTGGACSTVTLNFNMPGTFVHEVMVVGSAGRLVVRGTELYGQKNSASEEKLLLSEPLTSDIADVSDFDKVPPPYLMGIAHMVKALRQSFQDQEDRRTWDHKPLSVAATFEDGLYMQRVVDAIKRSNRSGEWESVELTNEETDSNQNLSEVIQHNL.

Residues 1–25 (MMTLPGIGVFGTGNTARVLIQLLRA) form the signal peptide. Residues 358 to 384 (GEWESVELTNEETDSNQNLSEVIQHNL) form a disordered region. Residues 372–384 (SNQNLSEVIQHNL) show a composition bias toward polar residues.

It belongs to the Gfo/Idh/MocA family.

It localises to the secreted. It is found in the extracellular space. Its subcellular location is the extracellular matrix. Functionally, promotes matrix assembly. The polypeptide is Glucose-fructose oxidoreductase domain-containing protein 2 (gfod2) (Xenopus laevis (African clawed frog)).